A 36-amino-acid chain; its full sequence is HFIDVKCTTSKECWPPCKAATGKAAGKCMNKKCKCQ.

This sequence belongs to the short scorpion toxin superfamily. Potassium channel inhibitor family. Alpha-KTx 01 subfamily. Expressed by the venom gland.

The protein resides in the secreted. Potent selective inhibitor of Kv1/KCNA voltage-gated potassium channels. The chain is Potassium channel toxin alpha-KTx 1.9 from Centruroides limbatus (Bark scorpion).